The chain runs to 485 residues: Pumilio domain-containing protein 7 (485 aa).

A disordered region spans residues 29–72; sequence NKTHKNKNPKPPVKLLPYRHGSNTTSSDSDSYIFNSGSGSSDAE. Positions 49–71 are enriched in polar residues; that stretch reads GSNTTSSDSDSYIFNSGSGSSDA. Pumilio repeat units lie at residues 86-124, 128-163, 164-200, 201-236, 237-279, 287-324, 326-361, and 370-411; these read DVLLNGQLIDFAIDPSGVKFLEANYPLDSEDQIRKAVFE, ESTTLFVGLCHSRNGNFIVQKLVELATPAEQRELLR, QMIDGGLLAMCKDKFACRVVQLALQKFDHSNVFQLIQ, ELSTFDLAAMCTDQISIHVIQRVVKQLPVDMWTFFV, HFLS…FRIQ, CIVRNCYRLSSNEFANYVIQYVIKSSGIMEMYRDTIID, CLLRNLLSMSQDKYASHVIEGAFLFAPPALLHEMME, and DVES…RELP. The segment at 439-454 is RNA-binding; that stretch reads FSSGKKIIDSVMRHGV.

RNA-binding protein that binds to the consensus sequence 5'-CUCUGUAUCUUGU-3' in mRNA 3'-UTRs and modulates mRNA expression and stability. Functions redundantly with puf-5 and puf-6 in oocyte formation and organization, early embryonic cell divisions, and repression of expression of glp-1 and other maternal mRNAs in late oogenesis. The chain is Pumilio domain-containing protein 7 from Caenorhabditis elegans.